The following is a 378-amino-acid chain: Beta-1,3-galactosyltransferase pvg3 (378 aa).

Residues 1 to 8 (MFSNSKKK) lie on the Cytoplasmic side of the membrane. A helical; Signal-anchor for type II membrane protein membrane pass occupies residues 9–29 (IFLYVLIAGVATFSFAFLVLN). The Lumenal segment spans residues 30-378 (RLQAEEHSLA…ATIPLPSLDV (349 aa)). N53, N97, N180, and N354 each carry an N-linked (GlcNAc...) asparagine glycan.

Belongs to the glycosyltransferase 31 family.

Its subcellular location is the endoplasmic reticulum membrane. The protein localises to the golgi apparatus. It localises to the golgi stack membrane. The catalysed reaction is 3-O-(beta-D-galactosyl-(1-&gt;4)-beta-D-xylosyl)-L-seryl-[protein] + UDP-alpha-D-galactose = 3-O-(beta-D-galactosyl-(1-&gt;3)-beta-D-galactosyl-(1-&gt;4)-beta-D-xylosyl)-L-seryl-[protein] + UDP + H(+). Involved in cell wall biogenesis. Has a role in the addition of Gal-beta1,3 moeities to galactomannans and their subsequent pyruvylation. Has a role in meiosis. The protein is Beta-1,3-galactosyltransferase pvg3 (pvg3) of Schizosaccharomyces pombe (strain 972 / ATCC 24843) (Fission yeast).